Reading from the N-terminus, the 625-residue chain is Cytochrome c oxidase subunit 1 (625 aa).

A helical membrane pass occupies residues 23-43 (IAIMYLIAGTLFFVKAGVMAL). H69 contributes to the Fe(II)-heme a binding site. Helical transmembrane passes span 72-92 (IMLF…VIPL), 99-119 (VAFP…GLLL), 151-171 (FYVL…INFL), 195-215 (FISS…LALL), 240-260 (IFWI…FGII), and 272-292 (LFGY…GFMV). Cu cation contacts are provided by H246 and Y250. The segment at residues 246–250 (HPEVY) is a cross-link (1'-histidyl-3'-tyrosine (His-Tyr)). The Cu cation site is built by H295 and H296. 2 helical membrane-spanning segments follow: residues 309 to 329 (IFAV…FNWL) and 343 to 363 (MLFA…GVML). Residue H381 coordinates heme a3. A run of 5 helical transmembrane segments spans residues 382–402 (FHYI…FYWY), 417–437 (LFFW…HLLG), 460–480 (ISTI…INVI), 551–571 (SILP…LIML), and 577–597 (IINP…CMFV). H383 is a Fe(II)-heme a binding site.

The protein belongs to the heme-copper respiratory oxidase family.

It is found in the cell membrane. It catalyses the reaction 4 Fe(II)-[cytochrome c] + O2 + 8 H(+)(in) = 4 Fe(III)-[cytochrome c] + 2 H2O + 4 H(+)(out). It participates in energy metabolism; oxidative phosphorylation. Its function is as follows. Cytochrome c oxidase is the component of the respiratory chain that catalyzes the reduction of oxygen to water. Subunits 1-3 form the functional core of the enzyme complex. CO I is the catalytic subunit of the enzyme. Electrons originating in cytochrome c are transferred via the copper A center of subunit 2 and heme A of subunit 1 to the bimetallic center formed by heme A3 and copper B. This is Cytochrome c oxidase subunit 1 (ctaD) from Alkalihalophilus pseudofirmus (strain ATCC BAA-2126 / JCM 17055 / OF4) (Bacillus pseudofirmus).